We begin with the raw amino-acid sequence, 272 residues long: DNA repair protein RecO (272 aa).

It belongs to the RecO family.

In terms of biological role, involved in DNA repair and RecF pathway recombination. This chain is DNA repair protein RecO, found in Latilactobacillus sakei subsp. sakei (strain 23K) (Lactobacillus sakei subsp. sakei).